We begin with the raw amino-acid sequence, 334 residues long: ELMO domain-containing protein 1 (334 aa).

The ELMO domain maps to Gln133–Leu314.

Its function is as follows. Acts as a GTPase-activating protein (GAP) toward guanine nucleotide exchange factors like ARL2, ARL3, ARF1 and ARF6, but not for GTPases outside the Arf family. The chain is ELMO domain-containing protein 1 (ELMOD1) from Homo sapiens (Human).